The following is a 462-amino-acid chain: tRNA(Ile)-lysidine synthase (462 aa).

27-32 (SGGPDS) lines the ATP pocket.

This sequence belongs to the tRNA(Ile)-lysidine synthase family.

The protein localises to the cytoplasm. It catalyses the reaction cytidine(34) in tRNA(Ile2) + L-lysine + ATP = lysidine(34) in tRNA(Ile2) + AMP + diphosphate + H(+). Its function is as follows. Ligates lysine onto the cytidine present at position 34 of the AUA codon-specific tRNA(Ile) that contains the anticodon CAU, in an ATP-dependent manner. Cytidine is converted to lysidine, thus changing the amino acid specificity of the tRNA from methionine to isoleucine. The protein is tRNA(Ile)-lysidine synthase of Clostridioides difficile (strain 630) (Peptoclostridium difficile).